Here is a 215-residue protein sequence, read N- to C-terminus: ATP-dependent Clp protease proteolytic subunit 3 (215 aa).

Residue Ser119 is the Nucleophile of the active site. His144 is an active-site residue.

This sequence belongs to the peptidase S14 family. As to quaternary structure, fourteen ClpP subunits assemble into 2 heptameric rings which stack back to back to give a disk-like structure with a central cavity, resembling the structure of eukaryotic proteasomes.

It is found in the cytoplasm. The catalysed reaction is Hydrolysis of proteins to small peptides in the presence of ATP and magnesium. alpha-casein is the usual test substrate. In the absence of ATP, only oligopeptides shorter than five residues are hydrolyzed (such as succinyl-Leu-Tyr-|-NHMec, and Leu-Tyr-Leu-|-Tyr-Trp, in which cleavage of the -Tyr-|-Leu- and -Tyr-|-Trp bonds also occurs).. In terms of biological role, cleaves peptides in various proteins in a process that requires ATP hydrolysis. Has a chymotrypsin-like activity. Plays a major role in the degradation of misfolded proteins. This is ATP-dependent Clp protease proteolytic subunit 3 from Prochlorococcus marinus subsp. pastoris (strain CCMP1986 / NIES-2087 / MED4).